The primary structure comprises 190 residues: Potassium-transporting ATPase KdpC subunit (190 aa).

Residues 10 to 30 form a helical membrane-spanning segment; it reads TFLFLLLITGGVYPLLTTALG.

The protein belongs to the KdpC family. In terms of assembly, the system is composed of three essential subunits: KdpA, KdpB and KdpC.

It is found in the cell inner membrane. Part of the high-affinity ATP-driven potassium transport (or Kdp) system, which catalyzes the hydrolysis of ATP coupled with the electrogenic transport of potassium into the cytoplasm. This subunit acts as a catalytic chaperone that increases the ATP-binding affinity of the ATP-hydrolyzing subunit KdpB by the formation of a transient KdpB/KdpC/ATP ternary complex. This chain is Potassium-transporting ATPase KdpC subunit, found in Shigella flexneri serotype 5b (strain 8401).